A 192-amino-acid chain; its full sequence is Intraflagellar transport protein 22 (192 aa).

GTP-binding positions include 12-19 and 62-69; these read GPQRTGKT and WDVSGSVQ.

It belongs to the small GTPase superfamily. Rab family. Component of the IFT complex B, composed of IFT88, IFT70, IFT52, IFT46, IFT27, IFT25 and IFT22.

It is found in the cell projection. The protein resides in the cilium. Its subcellular location is the flagellum. Functionally, component of the intraflagellar transport (IFT) complex B. Functions in regulating the cellular pool size of both complex A and complex B and thus plays a critical role in determining the cellular availability of IFT particles. The sequence is that of Intraflagellar transport protein 22 (FAP9) from Chlamydomonas reinhardtii (Chlamydomonas smithii).